Reading from the N-terminus, the 799-residue chain is Disintegrin and metalloproteinase domain-containing protein B (799 aa).

The first 23 residues, 1-23 (MKAFSCLLSVIATAASLFQHVDA), serve as a signal peptide directing secretion. Topologically, residues 24 to 707 (RSHARDKLNN…VSDWVSRHKP (684 aa)) are extracellular. Residues Asn33, Asn227, Asn228, Asn314, and Asn408 are each glycosylated (N-linked (GlcNAc...) asparagine). The region spanning 272-511 (KVALIGVVAD…RTILTSCLTT (240 aa)) is the Peptidase M12B domain. 3 cysteine pairs are disulfide-bonded: Cys396-Cys496, Cys449-Cys460, and Cys581-Cys601. His432 is a binding site for Zn(2+). The active site involves Glu433. Positions 436 and 442 each coordinate Zn(2+). Residues 520–609 (GQQCGNGIVE…DCPHDIHSKD (90 aa)) enclose the Disintegrin domain. A helical membrane pass occupies residues 708-728 (IVIGVAVGAGCLLLLAIASCI). Residues 729–799 (CGRSRRQRPR…PGHLPSTRYA (71 aa)) lie on the Cytoplasmic side of the membrane. The tract at residues 753 to 799 (VYNGWNGAPPNAQQSSPGGHPPYNNIPPPINAPPPAYPGHLPSTRYA) is disordered. A compositionally biased stretch (pro residues) spans 776-789 (NNIPPPINAPPPAY).

The cofactor is Zn(2+).

The protein localises to the membrane. Its function is as follows. Probable zinc protease. The protein is Disintegrin and metalloproteinase domain-containing protein B (ADM-B) of Arthroderma benhamiae (strain ATCC MYA-4681 / CBS 112371) (Trichophyton mentagrophytes).